A 1617-amino-acid polypeptide reads, in one-letter code: ATP-binding cassette sub-family A member 6 (1617 aa).

A helical transmembrane segment spans residues 31–51 (LLEWGLSILLGLCIALFSSSM). Asn-84 and Asn-109 each carry an N-linked (GlcNAc...) asparagine glycan. A run of 6 helical transmembrane segments spans residues 222-242 (MFIL…SLNV), 268-288 (GLIY…IITF), 297-317 (FMVI…LVFL), 327-347 (LTNL…FTVF), 355-375 (LEWI…IQII), and 397-417 (IATF…ALYF). The 236-residue stretch at 478 to 713 (IRIRNVKKEY…WGLGYHLSLH (236 aa)) folds into the ABC transporter 1 domain. 514–521 (GHSGAGKS) provides a ligand contact to ATP. Residues 854 to 874 (VLLTLLLVFGIAIFPLIVENI) traverse the membrane as a helical segment. A glycan (N-linked (GlcNAc...) asparagine) is linked at Asn-940. 6 consecutive transmembrane segments (helical) span residues 1007-1027 (IGLW…LCSI), 1062-1082 (ALVD…IFYI), 1094-1114 (IVFA…FFIY), 1127-1147 (SGLW…ITLI), 1150-1170 (FDLS…LLGF), and 1194-1214 (ATDF…VFVL). The 226-residue stretch at 1288 to 1513 (GQKKSCFSKR…LGKDYILELK (226 aa)) folds into the ABC transporter 2 domain. 1320–1327 (GPNGAGKS) is an ATP binding site.

This sequence belongs to the ABC transporter superfamily. ABCA family. Widely expressed with higher expression in liver.

The protein resides in the golgi apparatus membrane. Probable transporter which may play a role in macrophage lipid transport and homeostasis. The chain is ATP-binding cassette sub-family A member 6 (ABCA6) from Homo sapiens (Human).